We begin with the raw amino-acid sequence, 886 residues long: Inter-alpha-trypsin inhibitor heavy chain H3 (886 aa).

The N-terminal stretch at 1 to 18 (MWWPYLVLALLSGLEASG) is a signal peptide. The propeptide occupies 19–30 (FPRSPLRLLGKR). The VIT domain occupies 26–155 (LLGKRSLPEG…KVTFELTYEE (130 aa)). N-linked (GlcNAc...) asparagine glycosylation occurs at Asn88. Positions 279 to 439 (PKNIVFVIDI…YNFLETMALE (161 aa)) constitute a VWFA domain. Asn577 carries an N-linked (GlcNAc...) asparagine glycan. At Asp646 the chain carries Aspartate 1-(chondroitin 4-sulfate)-ester. Residues 647–886 (PHFIIQVPGK…HTDYIVPSLF (240 aa)) constitute a propeptide that is removed on maturation.

The protein belongs to the ITIH family. In terms of assembly, I-alpha-I plasma protease inhibitors are assembled from one or two heavy chains (HC) and one light chain, bikunin. Pre-alpha-inhibitor (P-alpha-I) is composed of ITIH3/HC3 and bikunin. In terms of processing, heavy chains are linked to bikunin via chondroitin 4-sulfate esterified to the alpha-carboxyl of the C-terminal aspartate after propeptide cleavage.

The protein localises to the secreted. Its function is as follows. May act as a carrier of hyaluronan in serum or as a binding protein between hyaluronan and other matrix protein, including those on cell surfaces in tissues to regulate the localization, synthesis and degradation of hyaluronan which are essential to cells undergoing biological processes. This is Inter-alpha-trypsin inhibitor heavy chain H3 (ITIH3) from Mesocricetus auratus (Golden hamster).